The chain runs to 642 residues: 1-deoxy-D-xylulose-5-phosphate synthase (642 aa).

Thiamine diphosphate contacts are provided by residues H79 and 120-122 (AHS). A Mg(2+)-binding site is contributed by D155. Thiamine diphosphate-binding positions include 156-157 (GS), N184, Y293, and E375. N184 is a binding site for Mg(2+).

This sequence belongs to the transketolase family. DXPS subfamily. Homodimer. The cofactor is Mg(2+). Thiamine diphosphate serves as cofactor.

It catalyses the reaction D-glyceraldehyde 3-phosphate + pyruvate + H(+) = 1-deoxy-D-xylulose 5-phosphate + CO2. It functions in the pathway metabolic intermediate biosynthesis; 1-deoxy-D-xylulose 5-phosphate biosynthesis; 1-deoxy-D-xylulose 5-phosphate from D-glyceraldehyde 3-phosphate and pyruvate: step 1/1. Catalyzes the acyloin condensation reaction between C atoms 2 and 3 of pyruvate and glyceraldehyde 3-phosphate to yield 1-deoxy-D-xylulose-5-phosphate (DXP). The protein is 1-deoxy-D-xylulose-5-phosphate synthase of Ruegeria pomeroyi (strain ATCC 700808 / DSM 15171 / DSS-3) (Silicibacter pomeroyi).